The sequence spans 155 residues: SsrA-binding protein (155 aa).

Basic and acidic residues predominate over residues 135-147 (TIKRRDQERDIKK). The interval 135-155 (TIKRRDQERDIKKQMKHYNAR) is disordered.

Belongs to the SmpB family.

The protein resides in the cytoplasm. In terms of biological role, required for rescue of stalled ribosomes mediated by trans-translation. Binds to transfer-messenger RNA (tmRNA), required for stable association of tmRNA with ribosomes. tmRNA and SmpB together mimic tRNA shape, replacing the anticodon stem-loop with SmpB. tmRNA is encoded by the ssrA gene; the 2 termini fold to resemble tRNA(Ala) and it encodes a 'tag peptide', a short internal open reading frame. During trans-translation Ala-aminoacylated tmRNA acts like a tRNA, entering the A-site of stalled ribosomes, displacing the stalled mRNA. The ribosome then switches to translate the ORF on the tmRNA; the nascent peptide is terminated with the 'tag peptide' encoded by the tmRNA and targeted for degradation. The ribosome is freed to recommence translation, which seems to be the essential function of trans-translation. This Streptococcus pyogenes serotype M12 (strain MGAS2096) protein is SsrA-binding protein.